Consider the following 451-residue polypeptide: Tubulin alpha-2 chain (451 aa).

Glutamine 11 provides a ligand contact to GTP. Lysine 40 carries the post-translational modification N6-acetyllysine. GTP is bound by residues glutamate 71, glycine 144, threonine 145, threonine 179, asparagine 206, and asparagine 228. Residue glutamate 71 coordinates Mg(2+). Glutamate 254 is a catalytic residue.

The protein belongs to the tubulin family. In terms of assembly, dimer of alpha and beta chains. A typical microtubule is a hollow water-filled tube with an outer diameter of 25 nm and an inner diameter of 15 nM. Alpha-beta heterodimers associate head-to-tail to form protofilaments running lengthwise along the microtubule wall with the beta-tubulin subunit facing the microtubule plus end conferring a structural polarity. Microtubules usually have 13 protofilaments but different protofilament numbers can be found in some organisms and specialized cells. Mg(2+) is required as a cofactor. Undergoes a tyrosination/detyrosination cycle, the cyclic removal and re-addition of a C-terminal tyrosine residue by the enzymes tubulin tyrosine carboxypeptidase (TTCP) and tubulin tyrosine ligase (TTL), respectively. In terms of processing, acetylation of alpha chains at Lys-40 stabilizes microtubules and affects affinity and processivity of microtubule motors. This modification has a role in multiple cellular functions, ranging from cell motility, cell cycle progression or cell differentiation to intracellular trafficking and signaling.

The protein localises to the cytoplasm. Its subcellular location is the cytoskeleton. It catalyses the reaction GTP + H2O = GDP + phosphate + H(+). In terms of biological role, tubulin is the major constituent of microtubules, a cylinder consisting of laterally associated linear protofilaments composed of alpha- and beta-tubulin heterodimers. Microtubules grow by the addition of GTP-tubulin dimers to the microtubule end, where a stabilizing cap forms. Below the cap, tubulin dimers are in GDP-bound state, owing to GTPase activity of alpha-tubulin. In Hordeum vulgare (Barley), this protein is Tubulin alpha-2 chain (TUBA2).